The following is a 371-amino-acid chain: tRNA-specific 2-thiouridylase MnmA (371 aa).

ATP is bound by residues 13-20 (GMSGGVDS) and Met-39. The interaction with target base in tRNA stretch occupies residues 99–101 (NPD). The Nucleophile role is filled by Cys-104. An intrachain disulfide couples Cys-104 to Cys-200. An ATP-binding site is contributed by Gly-128. Residues 150-152 (KDQ) are interaction with tRNA. Residue Cys-200 is the Cysteine persulfide intermediate of the active site. The segment at 308–309 (RY) is interaction with tRNA.

It belongs to the MnmA/TRMU family.

It is found in the cytoplasm. It catalyses the reaction S-sulfanyl-L-cysteinyl-[protein] + uridine(34) in tRNA + AH2 + ATP = 2-thiouridine(34) in tRNA + L-cysteinyl-[protein] + A + AMP + diphosphate + H(+). Functionally, catalyzes the 2-thiolation of uridine at the wobble position (U34) of tRNA, leading to the formation of s(2)U34. The chain is tRNA-specific 2-thiouridylase MnmA from Bacillus anthracis.